Consider the following 127-residue polypeptide: Large ribosomal subunit protein bL17 (127 aa).

This sequence belongs to the bacterial ribosomal protein bL17 family. As to quaternary structure, part of the 50S ribosomal subunit. Contacts protein L32.

This chain is Large ribosomal subunit protein bL17, found in Pediococcus pentosaceus (strain ATCC 25745 / CCUG 21536 / LMG 10740 / 183-1w).